Here is a 165-residue protein sequence, read N- to C-terminus: Cyclic pyranopterin monophosphate synthase (165 aa).

Residues 76–78 (LCH) and 114–115 (ME) contribute to the substrate site. The active site involves aspartate 129.

Belongs to the MoaC family. Homohexamer; trimer of dimers.

It catalyses the reaction (8S)-3',8-cyclo-7,8-dihydroguanosine 5'-triphosphate = cyclic pyranopterin phosphate + diphosphate. It participates in cofactor biosynthesis; molybdopterin biosynthesis. Its function is as follows. Catalyzes the conversion of (8S)-3',8-cyclo-7,8-dihydroguanosine 5'-triphosphate to cyclic pyranopterin monophosphate (cPMP). The sequence is that of Cyclic pyranopterin monophosphate synthase from Brucella canis (strain ATCC 23365 / NCTC 10854 / RM-666).